The sequence spans 101 residues: UPF0473 protein str1961 (101 aa).

Belongs to the UPF0473 family.

In Streptococcus thermophilus (strain CNRZ 1066), this protein is UPF0473 protein str1961.